A 131-amino-acid chain; its full sequence is Probable histone H2A.3 (131 aa).

A disordered region spans residues 1 to 23; sequence MAGRGKQLGSGAAKKSTSRSSKA. Residues 9–23 show a composition bias toward low complexity; sequence GSGAAKKSTSRSSKA.

This sequence belongs to the histone H2A family. The nucleosome is a histone octamer containing two molecules each of H2A, H2B, H3 and H4 assembled in one H3-H4 heterotetramer and two H2A-H2B heterodimers. The octamer wraps approximately 147 bp of DNA. In terms of processing, not ubiquitinated. Expressed in meristems and dividing cells.

The protein resides in the nucleus. Its subcellular location is the chromosome. Core component of nucleosome. Nucleosomes wrap and compact DNA into chromatin, limiting DNA accessibility to the cellular machineries which require DNA as a template. Histones thereby play a central role in transcription regulation, DNA repair, DNA replication and chromosomal stability. DNA accessibility is regulated via a complex set of post-translational modifications of histones, also called histone code, and nucleosome remodeling. This is Probable histone H2A.3 from Arabidopsis thaliana (Mouse-ear cress).